The following is a 235-amino-acid chain: NADH-quinone oxidoreductase subunit C (235 aa).

Belongs to the complex I 30 kDa subunit family. As to quaternary structure, NDH-1 is composed of 14 different subunits. Subunits NuoB, C, D, E, F, and G constitute the peripheral sector of the complex.

Its subcellular location is the cell membrane. It catalyses the reaction a quinone + NADH + 5 H(+)(in) = a quinol + NAD(+) + 4 H(+)(out). Its function is as follows. NDH-1 shuttles electrons from NADH, via FMN and iron-sulfur (Fe-S) centers, to quinones in the respiratory chain. The immediate electron acceptor for the enzyme in this species is believed to be a menaquinone. Couples the redox reaction to proton translocation (for every two electrons transferred, four hydrogen ions are translocated across the cytoplasmic membrane), and thus conserves the redox energy in a proton gradient. The chain is NADH-quinone oxidoreductase subunit C from Mycolicibacterium paratuberculosis (strain ATCC BAA-968 / K-10) (Mycobacterium paratuberculosis).